The sequence spans 172 residues: RNA pyrophosphohydrolase (172 aa).

Residues 6-149 (GFRANVGIII…KRDVYRKVMK (144 aa)) enclose the Nudix hydrolase domain. The Nudix box motif lies at 38 to 59 (GGLDDGESVEEAMYRELYEEVG).

It belongs to the Nudix hydrolase family. RppH subfamily. The cofactor is a divalent metal cation.

In terms of biological role, accelerates the degradation of transcripts by removing pyrophosphate from the 5'-end of triphosphorylated RNA, leading to a more labile monophosphorylated state that can stimulate subsequent ribonuclease cleavage. This chain is RNA pyrophosphohydrolase, found in Shewanella frigidimarina (strain NCIMB 400).